The sequence spans 560 residues: Formate--tetrahydrofolate ligase (560 aa).

ATP is bound at residue 69 to 76 (TPAGEGKS).

The protein belongs to the formate--tetrahydrofolate ligase family.

It carries out the reaction (6S)-5,6,7,8-tetrahydrofolate + formate + ATP = (6R)-10-formyltetrahydrofolate + ADP + phosphate. It participates in one-carbon metabolism; tetrahydrofolate interconversion. The sequence is that of Formate--tetrahydrofolate ligase from Bacillus pumilus (strain SAFR-032).